The sequence spans 478 residues: Protein nucleotidyltransferase YdiU (478 aa).

Residues G84, G86, R87, K107, D119, G120, R170, and R177 each coordinate ATP. Catalysis depends on D246, which acts as the Proton acceptor. Residues N247 and D256 each contribute to the Mg(2+) site. Residue D256 coordinates ATP.

This sequence belongs to the SELO family. Mg(2+) is required as a cofactor. Mn(2+) serves as cofactor.

It carries out the reaction L-seryl-[protein] + ATP = 3-O-(5'-adenylyl)-L-seryl-[protein] + diphosphate. The enzyme catalyses L-threonyl-[protein] + ATP = 3-O-(5'-adenylyl)-L-threonyl-[protein] + diphosphate. It catalyses the reaction L-tyrosyl-[protein] + ATP = O-(5'-adenylyl)-L-tyrosyl-[protein] + diphosphate. The catalysed reaction is L-histidyl-[protein] + UTP = N(tele)-(5'-uridylyl)-L-histidyl-[protein] + diphosphate. It carries out the reaction L-seryl-[protein] + UTP = O-(5'-uridylyl)-L-seryl-[protein] + diphosphate. The enzyme catalyses L-tyrosyl-[protein] + UTP = O-(5'-uridylyl)-L-tyrosyl-[protein] + diphosphate. In terms of biological role, nucleotidyltransferase involved in the post-translational modification of proteins. It can catalyze the addition of adenosine monophosphate (AMP) or uridine monophosphate (UMP) to a protein, resulting in modifications known as AMPylation and UMPylation. The protein is Protein nucleotidyltransferase YdiU of Escherichia coli (strain ATCC 8739 / DSM 1576 / NBRC 3972 / NCIMB 8545 / WDCM 00012 / Crooks).